The chain runs to 39 residues: Photosystem II reaction center protein L (39 aa).

The chain crosses the membrane as a helical span at residues 18 to 38 (SLYLGLLLIAVLGILFSSYFF).

This sequence belongs to the PsbL family. As to quaternary structure, PSII is composed of 1 copy each of membrane proteins PsbA, PsbB, PsbC, PsbD, PsbE, PsbF, PsbH, PsbI, PsbJ, PsbK, PsbL, PsbM, PsbT, PsbX, PsbY, PsbZ, Psb30/Ycf12, peripheral proteins PsbO, CyanoQ (PsbQ), PsbU, PsbV and a large number of cofactors. It forms dimeric complexes.

The protein localises to the cellular thylakoid membrane. Its function is as follows. One of the components of the core complex of photosystem II (PSII). PSII is a light-driven water:plastoquinone oxidoreductase that uses light energy to abstract electrons from H(2)O, generating O(2) and a proton gradient subsequently used for ATP formation. It consists of a core antenna complex that captures photons, and an electron transfer chain that converts photonic excitation into a charge separation. This subunit is found at the monomer-monomer interface and is required for correct PSII assembly and/or dimerization. This chain is Photosystem II reaction center protein L, found in Crocosphaera subtropica (strain ATCC 51142 / BH68) (Cyanothece sp. (strain ATCC 51142)).